Here is a 1637-residue protein sequence, read N- to C-terminus: Stress response protein NST1 (1637 aa).

A compositionally biased stretch (polar residues) spans 1-17; it reads MSNRGNLNLNLPPSSGK. Disordered stretches follow at residues 1-155, 221-252, 442-494, 504-523, 681-734, 746-825, 871-1036, 1049-1075, 1176-1299, and 1512-1534; these read MSNR…EITN, HQASNNNHIHNHSHTSSHPLQHTPNHLHHASH, LKMN…SQQL, KNNLQQNHHTHHHHQQPLQH, KTPY…EIDD, QHHH…EEEK, AKRE…SKHV, SKQNQAQNGNQSHLPPQSRLRQDEENP, NSSQ…GAII, and YTQQQQQQQQPQPQPQSQQQYPL. The segment covering 24–33 has biased composition (basic and acidic residues); sequence VHFELSKEKN. Composition is skewed to low complexity over residues 34 to 53 and 64 to 113; these read NSTNSNPHTSSTSTSNSNNT and NDNN…QQQS. Residues 124-134 show a composition bias toward basic residues; it reads AKKRKKKKSKK. Residues 135 to 155 show a composition bias toward low complexity; it reads SSNNNGNNSNTNSNSNSEITN. The span at 446-470 shows a compositional bias: low complexity; the sequence is QRQQSQSQSQSQSQQQRDVQTAQSQ. Polar residues predominate over residues 471–487; that stretch reads VLSKDSSLKNANTSMNK. The segment covering 692–706 has biased composition (polar residues); that stretch reads PAATSQDREQQVQPN. A compositionally biased stretch (basic and acidic residues) spans 717 to 734; sequence DHEHEHEHEHEHEHEIDD. The segment covering 754–808 has biased composition (acidic residues); sequence EEYDEEDEEDDEEYEYGDDEEEEDEEDEEEGEDEELEEVVEDDVDEEILDDEEEF. Residues 855–1023 adopt a coiled-coil conformation; it reads KDNTRKLFEE…KQLEKEAAVS (169 aa). 2 stretches are compositionally biased toward basic and acidic residues: residues 871–887 and 896–1021; these read AKREKEAKKLKQKEKAK and AKEE…KEAA. The span at 1049-1063 shows a compositional bias: polar residues; it reads SKQNQAQNGNQSHLP. Residues 1176-1199 show a composition bias toward low complexity; that stretch reads NSSQGSPWTTNSTLSSNLGSTGLS. A compositionally biased stretch (polar residues) spans 1201–1228; the sequence is GQGQTVSGVNTNLPSSIGITSGGASQIF. Low complexity predominate over residues 1234–1257; that stretch reads PQLQPHQPQQQQQQQQQQQQQQQQ. Residues 1258–1267 are compositionally biased toward polar residues; that stretch reads NYFSPFNSFS. Composition is skewed to low complexity over residues 1282–1299 and 1514–1534; these read TTNINNSTTASSSTGAII and QQQQQQQQPQPQPQSQQQYPL.

Belongs to the NST1 family.

The protein resides in the cytoplasm. May act as a negative regulator of salt tolerance. The polypeptide is Stress response protein NST1 (NST1) (Lodderomyces elongisporus (strain ATCC 11503 / CBS 2605 / JCM 1781 / NBRC 1676 / NRRL YB-4239) (Yeast)).